The primary structure comprises 170 residues: Guided entry of tail-anchored proteins factor 1 (170 aa).

The Lumenal segment spans residues 1–6 (MAAGFN). The helical transmembrane segment at 7-27 (WFLVLSSVFLCNLVKTFLPSI) threads the bilayer. The Cytoplasmic portion of the chain corresponds to 28 to 96 (SSFLSKIFHK…KSRTAQQAKM (69 aa)). Residues 35–93 (FHKDADQEMEMRTEIQNMKMELSTISMMDEFARYARLERKINKMTDQLKTLVKSRTAQQ) are interaction with GET3/TRC40. Residues 61–91 (MMDEFARYARLERKINKMTDQLKTLVKSRTA) adopt a coiled-coil conformation. Residues 97–117 (KWIVNIAFYILQAALMISLIL) traverse the membrane as a helical segment. The Lumenal segment spans residues 118–137 (KYYADPVTVVPSKWIAPLER). A helical transmembrane segment spans residues 138–158 (LVAFPSGVAGGVGITCWLVVC). The Cytoplasmic segment spans residues 159 to 170 (NKVVALILQAVS).

It belongs to the WRB/GET1 family. In terms of assembly, component of the Golgi to ER traffic (GET) complex, which is composed of GET1/WRB, CAMLG/GET2 and GET3/TRC40. Within the complex, GET1 and CAMLG form a heterotetramer which is stabilized by phosphatidylinositol binding and which binds to the GET3 homodimer.

The protein resides in the endoplasmic reticulum membrane. In terms of biological role, required for the post-translational delivery of tail-anchored (TA) proteins to the endoplasmic reticulum (ER). Together with CAMLG/GET2, acts as a membrane receptor for soluble GET3/TRC40, which recognizes and selectively binds the transmembrane domain of TA proteins in the cytosol. Required to ensure correct topology and ER insertion of CAMLG. This is Guided entry of tail-anchored proteins factor 1 from Danio rerio (Zebrafish).